The chain runs to 518 residues: Probable Xaa-Pro aminopeptidase HCDG_07916 (518 aa).

Residues aspartate 289, aspartate 300, glutamate 437, and glutamate 475 each coordinate Mn(2+).

This sequence belongs to the peptidase M24B family. Mn(2+) is required as a cofactor.

It carries out the reaction Release of any N-terminal amino acid, including proline, that is linked to proline, even from a dipeptide or tripeptide.. In terms of biological role, catalyzes the removal of a penultimate prolyl residue from the N-termini of peptides. This Ajellomyces capsulatus (strain H143) (Darling's disease fungus) protein is Probable Xaa-Pro aminopeptidase HCDG_07916.